Consider the following 736-residue polypeptide: Exo-oligoalginate lyase (736 aa).

The signal sequence occupies residues M1–A23. Substrate-binding positions include K136, Q146–N149, K198, H202, and Y257–R260. Y258 serves as the catalytic Proton donor. H413 serves as the catalytic Proton acceptor. Zn(2+) is bound by residues H415 and D433. R438 serves as a coordination point for substrate. A Zn(2+)-binding site is contributed by H464. Residue E667 coordinates substrate.

This sequence belongs to the polysaccharide lyase 17 family. In terms of assembly, homodimer. Zn(2+) serves as cofactor.

Its subcellular location is the periplasm. It carries out the reaction Cleavage of 4-deoxy-alpha-L-erythro-hex-4-enopyranuronoside oligosaccharides into 4-deoxy-alpha-L-erythro-hex-4-enopyranuronate monosaccharides.. Functionally, catalyzes the depolymerization of alginate through an exolytic mode of action, via a beta-elimination mechanism. Preferentially acts on oligoalginates with degrees of polymerization higher than 2 to produce the alginate monomer, 4-deoxy-L-erythro-5-hexoseulose uronic acid. The protein is Exo-oligoalginate lyase of Saccharophagus degradans (strain 2-40 / ATCC 43961 / DSM 17024).